Consider the following 728-residue polypeptide: Nucleolar GTP-binding protein 2 (728 aa).

Met-1 carries the post-translational modification N-acetylmethionine. Residues 1-33 form a disordered region; sequence MVKPKYKGRSTINRSAASTNPDRVQGAGGQNMR. The span at 10–22 shows a compositional bias: polar residues; it reads STINRSAASTNPD. The 162-residue stretch at 207–368 folds into the CP-type G domain; sequence WGELYKVIDS…LIDCPGVVYP (162 aa). Residues 317 to 324 and 361 to 365 contribute to the GTP site; these read GYPNVGKS and DCPGV. Disordered regions lie at residues 462-521, 538-595, and 636-728; these read PPNA…RNSE, VGPQ…DTKA, and YKEE…RQKQ. The segment covering 480-489 has biased composition (low complexity); the sequence is EVPTETTQNN. The span at 498-520 shows a compositional bias: basic and acidic residues; the sequence is EVERSDSITEKEPEGDCSQDRNS. A Phosphoserine modification is found at Ser-504. The segment covering 553–586 has biased composition (acidic residues); that stretch reads SDLEDLESSGEEEEQEQEQPGEDAEEERSPDTQE. Residues 718 to 728 are compositionally biased toward basic residues; that stretch reads KHRRNKFRQKQ.

Belongs to the TRAFAC class YlqF/YawG GTPase family. NOG2 subfamily. Interacts with LYAR and RPL23A. Interacts with the nuclear importin-beta receptor and, at a lower extent, with importin-alpha.

The protein localises to the nucleus. The protein resides in the nucleolus. GTPase that associates with pre-60S ribosomal subunits in the nucleolus and is required for their nuclear export and maturation. May promote cell proliferation possibly by increasing p53/TP53 protein levels, and consequently those of its downstream product CDKN1A/p21, and decreasing RPL23A protein levels. The chain is Nucleolar GTP-binding protein 2 (Gnl2) from Mus musculus (Mouse).